A 224-amino-acid polypeptide reads, in one-letter code: Phosphoribosylformylglycinamidine synthase subunit PurQ (224 aa).

The 223-residue stretch at 2-224 (KFAVIVFPGS…IVDNFVKGGV (223 aa)) folds into the Glutamine amidotransferase type-1 domain. The Nucleophile role is filled by cysteine 86. Catalysis depends on residues histidine 194 and glutamate 196.

In terms of assembly, part of the FGAM synthase complex composed of 1 PurL, 1 PurQ and 2 PurS subunits.

The protein localises to the cytoplasm. The catalysed reaction is N(2)-formyl-N(1)-(5-phospho-beta-D-ribosyl)glycinamide + L-glutamine + ATP + H2O = 2-formamido-N(1)-(5-O-phospho-beta-D-ribosyl)acetamidine + L-glutamate + ADP + phosphate + H(+). The enzyme catalyses L-glutamine + H2O = L-glutamate + NH4(+). It functions in the pathway purine metabolism; IMP biosynthesis via de novo pathway; 5-amino-1-(5-phospho-D-ribosyl)imidazole from N(2)-formyl-N(1)-(5-phospho-D-ribosyl)glycinamide: step 1/2. Its function is as follows. Part of the phosphoribosylformylglycinamidine synthase complex involved in the purines biosynthetic pathway. Catalyzes the ATP-dependent conversion of formylglycinamide ribonucleotide (FGAR) and glutamine to yield formylglycinamidine ribonucleotide (FGAM) and glutamate. The FGAM synthase complex is composed of three subunits. PurQ produces an ammonia molecule by converting glutamine to glutamate. PurL transfers the ammonia molecule to FGAR to form FGAM in an ATP-dependent manner. PurS interacts with PurQ and PurL and is thought to assist in the transfer of the ammonia molecule from PurQ to PurL. This Caldanaerobacter subterraneus subsp. tengcongensis (strain DSM 15242 / JCM 11007 / NBRC 100824 / MB4) (Thermoanaerobacter tengcongensis) protein is Phosphoribosylformylglycinamidine synthase subunit PurQ.